The following is a 347-amino-acid chain: Phosphate acyltransferase (347 aa).

Belongs to the PlsX family. As to quaternary structure, homodimer. Probably interacts with PlsY.

It is found in the cytoplasm. The catalysed reaction is a fatty acyl-[ACP] + phosphate = an acyl phosphate + holo-[ACP]. Its pathway is lipid metabolism; phospholipid metabolism. In terms of biological role, catalyzes the reversible formation of acyl-phosphate (acyl-PO(4)) from acyl-[acyl-carrier-protein] (acyl-ACP). This enzyme utilizes acyl-ACP as fatty acyl donor, but not acyl-CoA. This Methylobacillus flagellatus (strain ATCC 51484 / DSM 6875 / VKM B-1610 / KT) protein is Phosphate acyltransferase.